Consider the following 140-residue polypeptide: Large ribosomal subunit protein uL22c (140 aa).

Belongs to the universal ribosomal protein uL22 family. Part of the 50S ribosomal subunit.

The protein resides in the plastid. Its subcellular location is the chloroplast. Functionally, this protein binds specifically to 23S rRNA. Its function is as follows. The globular domain of the protein is located near the polypeptide exit tunnel on the outside of the subunit, while an extended beta-hairpin is found that lines the wall of the exit tunnel in the center of the 70S ribosome. The protein is Large ribosomal subunit protein uL22c (rpl22) of Calycanthus floridus var. glaucus (Eastern sweetshrub).